The following is a 395-amino-acid chain: Phosphoprotein (395 aa).

The tract at residues 65–72 is nuclear localization signal (NLS); the sequence is PVKPRRKK. The disordered stretch occupies residues 178–217; the sequence is NGVLHGSEIRSKSSSGVIPGVPQSRPQLASSPAHADPAPA. The span at 206–217 shows a compositional bias: low complexity; it reads ASSPAHADPAPA. Positions 225–234 are nuclear export signal (NES); that stretch reads IIELLKGLDL.

It belongs to the rubulavirus/avulavirus P protein family. In terms of assembly, interacts with host ARHGAP26; this interaction promotes host RHOA activation. Interacts with host KPNA1 and KPNA6.

The protein resides in the host cytoplasm. Its function is as follows. Essential component of the RNA polymerase and the nascent chain assembly complex. Also required during RNA synthesis. Also plays a role in viral growth by promoting host RHOA activation and thus actin formation via ARHGAP26 inhibition. The protein is Phosphoprotein (P/V) of Human parainfluenza 2 virus (HPIV-2).